Consider the following 366-residue polypeptide: Spermidine/putrescine import ATP-binding protein PotA (366 aa).

An ABC transporter domain is found at 8–239 (IRFENVTKQF…PINKFVADFI (232 aa)). Position 41–48 (41–48 (GPSGCGKT)) interacts with ATP.

The protein belongs to the ABC transporter superfamily. Spermidine/putrescine importer (TC 3.A.1.11.1) family. The complex is composed of two ATP-binding proteins (PotA), two transmembrane proteins (PotB and PotC) and a solute-binding protein (PotD).

It localises to the cell membrane. The enzyme catalyses ATP + H2O + polyamine-[polyamine-binding protein]Side 1 = ADP + phosphate + polyamineSide 2 + [polyamine-binding protein]Side 1.. Its function is as follows. Part of the ABC transporter complex PotABCD involved in spermidine/putrescine import. Responsible for energy coupling to the transport system. The sequence is that of Spermidine/putrescine import ATP-binding protein PotA from Listeria monocytogenes serovar 1/2a (strain ATCC BAA-679 / EGD-e).